A 547-amino-acid polypeptide reads, in one-letter code: CTP synthase (547 aa).

Positions 1–265 (MARFIFITGG…DQAVLDAFQI (265 aa)) are amidoligase domain. S13 contacts CTP. S13 provides a ligand contact to UTP. ATP-binding positions include 14–19 (SLGKGL) and D71. The Mg(2+) site is built by D71 and E139. CTP contacts are provided by residues 146-148 (DIE), 186-191 (KTKPTQ), and K222. UTP-binding positions include 186–191 (KTKPTQ) and K222. One can recognise a Glutamine amidotransferase type-1 domain in the interval 291-546 (KIAIVGKYVQ…VRAAKESSRL (256 aa)). Residue G353 participates in L-glutamine binding. C380 serves as the catalytic Nucleophile; for glutamine hydrolysis. Residues 381-384 (LGMQ), E404, and R474 each bind L-glutamine. Residues H519 and E521 contribute to the active site.

Belongs to the CTP synthase family. In terms of assembly, homotetramer.

The catalysed reaction is UTP + L-glutamine + ATP + H2O = CTP + L-glutamate + ADP + phosphate + 2 H(+). It carries out the reaction L-glutamine + H2O = L-glutamate + NH4(+). The enzyme catalyses UTP + NH4(+) + ATP = CTP + ADP + phosphate + 2 H(+). Its pathway is pyrimidine metabolism; CTP biosynthesis via de novo pathway; CTP from UDP: step 2/2. With respect to regulation, allosterically activated by GTP, when glutamine is the substrate; GTP has no effect on the reaction when ammonia is the substrate. The allosteric effector GTP functions by stabilizing the protein conformation that binds the tetrahedral intermediate(s) formed during glutamine hydrolysis. Inhibited by the product CTP, via allosteric rather than competitive inhibition. Its function is as follows. Catalyzes the ATP-dependent amination of UTP to CTP with either L-glutamine or ammonia as the source of nitrogen. Regulates intracellular CTP levels through interactions with the four ribonucleotide triphosphates. The chain is CTP synthase from Ruegeria pomeroyi (strain ATCC 700808 / DSM 15171 / DSS-3) (Silicibacter pomeroyi).